The primary structure comprises 728 residues: Methionine--tRNA ligase (728 aa).

The short motif at 13-23 (PYANGSIHLGH) is the 'HIGH' region element. Positions 144, 147, 157, and 160 each coordinate Zn(2+). The short motif at 348–352 (KMSKS) is the 'KMSKS' region element. Residue K351 participates in ATP binding. The disordered stretch occupies residues 585–620 (LAPAKSQQVAQAVETMEKNSSTTPAPAKEGEAGQAS). Positions 628-728 (DFGKIDLRVA…EGARPGMKVK (101 aa)) constitute a tRNA-binding domain.

The protein belongs to the class-I aminoacyl-tRNA synthetase family. MetG type 1 subfamily. In terms of assembly, homodimer. It depends on Zn(2+) as a cofactor.

It is found in the cytoplasm. The enzyme catalyses tRNA(Met) + L-methionine + ATP = L-methionyl-tRNA(Met) + AMP + diphosphate. Functionally, is required not only for elongation of protein synthesis but also for the initiation of all mRNA translation through initiator tRNA(fMet) aminoacylation. The chain is Methionine--tRNA ligase from Nitrosospira multiformis (strain ATCC 25196 / NCIMB 11849 / C 71).